The primary structure comprises 245 residues: MGTDVWDDKQAAPPRRRRCLRWVLAAPLLFAAASVLQVLFLRVVDPPISSMMVGRYLEAWGEGDWSFSLHQRWRDYDKIAASLPISVVAAEDQQFPMHHGFDLQAIEKARDHNARGGRVRGASTISQQVAKNVFLWQGRSWVRKGLEAWYTVLIELFWPKQRILEMYLNVAEFGDGVYGAQAAAQQFWGKDAAGLSPTESARLAAVLPSPRHYDARSPGAFVQRRTMWIQRQARQLGGPAYLPAP.

The chain crosses the membrane as a helical span at residues 19-41 (CLRWVLAAPLLFAAASVLQVLFL).

The protein belongs to the glycosyltransferase 51 family.

It is found in the cell inner membrane. The enzyme catalyses [GlcNAc-(1-&gt;4)-Mur2Ac(oyl-L-Ala-gamma-D-Glu-L-Lys-D-Ala-D-Ala)](n)-di-trans,octa-cis-undecaprenyl diphosphate + beta-D-GlcNAc-(1-&gt;4)-Mur2Ac(oyl-L-Ala-gamma-D-Glu-L-Lys-D-Ala-D-Ala)-di-trans,octa-cis-undecaprenyl diphosphate = [GlcNAc-(1-&gt;4)-Mur2Ac(oyl-L-Ala-gamma-D-Glu-L-Lys-D-Ala-D-Ala)](n+1)-di-trans,octa-cis-undecaprenyl diphosphate + di-trans,octa-cis-undecaprenyl diphosphate + H(+). The protein operates within cell wall biogenesis; peptidoglycan biosynthesis. In terms of biological role, peptidoglycan polymerase that catalyzes glycan chain elongation from lipid-linked precursors. In Xanthomonas oryzae pv. oryzae (strain KACC10331 / KXO85), this protein is Biosynthetic peptidoglycan transglycosylase.